A 282-amino-acid chain; its full sequence is MKVKVISVLEDNYMYLVIEESTRDAVAVDAAVPKRLLEIVRKEDVVLRAVLITHHHWDHARGNEELVRLCPGLRVYGADERIGALTHRVAPDEELTFGAIRVRCLFTPCHTKGHMCYFMWEDGSLDAPALFSGDTLFVGGCGQFLEGTAEQMYTNLTQVLGDLPKETKVFCGHECTVRNLKFALKVEPENEAVKKKLAWARQRDDEDLPTVPSTLQEEFLYNPFLRVTEEAVQKFTGRKEPVEVLRALRTEKDNFKKPKERPHPQAMLAFDWGLFAPFLEKK.

Residues H54, H56, D58, H59, H110, D134, and H173 each contribute to the Zn(2+) site.

This sequence belongs to the metallo-beta-lactamase superfamily. Glyoxalase II family. Requires Zn(2+) as cofactor.

In terms of biological role, hydrolase acting on ester bonds. The sequence is that of Hydroxyacylglutathione hydrolase-like protein (HAGHL) from Gallus gallus (Chicken).